The chain runs to 257 residues: Hydroxyacylglutathione hydrolase (257 aa).

7 residues coordinate Zn(2+): H54, H56, D58, H59, H113, D137, and H175.

This sequence belongs to the metallo-beta-lactamase superfamily. Glyoxalase II family. Monomer. It depends on Zn(2+) as a cofactor.

It catalyses the reaction an S-(2-hydroxyacyl)glutathione + H2O = a 2-hydroxy carboxylate + glutathione + H(+). The protein operates within secondary metabolite metabolism; methylglyoxal degradation; (R)-lactate from methylglyoxal: step 2/2. Thiolesterase that catalyzes the hydrolysis of S-D-lactoyl-glutathione to form glutathione and D-lactic acid. The polypeptide is Hydroxyacylglutathione hydrolase (Rippkaea orientalis (strain PCC 8801 / RF-1) (Cyanothece sp. (strain PCC 8801))).